Consider the following 391-residue polypeptide: 3-ketoacyl-CoA thiolase (391 aa).

Cys95 functions as the Acyl-thioester intermediate in the catalytic mechanism. Residues His347 and Cys377 each act as proton acceptor in the active site.

This sequence belongs to the thiolase-like superfamily. Thiolase family. As to quaternary structure, heterotetramer of two alpha chains (FadB) and two beta chains (FadA).

Its subcellular location is the cytoplasm. The enzyme catalyses an acyl-CoA + acetyl-CoA = a 3-oxoacyl-CoA + CoA. Its pathway is lipid metabolism; fatty acid beta-oxidation. Catalyzes the final step of fatty acid oxidation in which acetyl-CoA is released and the CoA ester of a fatty acid two carbons shorter is formed. This chain is 3-ketoacyl-CoA thiolase, found in Ectopseudomonas mendocina (strain ymp) (Pseudomonas mendocina).